The chain runs to 62 residues: E3 SUMO-protein ligase EGR2 (62 aa).

3 consecutive C2H2-type zinc fingers follow at residues 1–21 (AEGCDRRFSASDELTRHIRIH), 27–49 (FQCAICMRNFSRSDHLTTHIRTH), and 55–62 (FACDYCGR).

The protein belongs to the EGR C2H2-type zinc-finger protein family. Interacts with HCFC1. Interacts with WWP2. Interacts with UBC9. Interacts with CITED1. Interacts (via phosphorylated form) with SFN. In terms of processing, ubiquitinated by WWP2 leading to proteasomal degradation. Post-translationally, acetylated. May be deacetylated by HDAC6, HDAC10 or SIRT1.

The protein resides in the nucleus. It participates in protein modification; protein sumoylation. Functionally, sequence-specific DNA-binding transcription factor. Plays a role in hindbrain segmentation by regulating the expression of a subset of homeobox containing genes and in Schwann cell myelination by regulating the expression of genes involved in the formation and maintenance of myelin. Binds to two EGR2-consensus sites EGR2A (5'-CTGTAGGAG-3') and EGR2B (5'-ATGTAGGTG-3') in the HOXB3 enhancer and promotes HOXB3 transcriptional activation. Binds to specific DNA sites located in the promoter region of HOXA4, HOXB2 and ERBB2. Regulates hindbrain segmentation by controlling the expression of Hox genes, such as HOXA4, HOXB3 and HOXB2, and thereby specifying odd and even rhombomeres. Promotes the expression of HOXB3 in the rhombomere r5 in the hindbrain. Regulates myelination in the peripheral nervous system after birth, possibly by regulating the expression of myelin proteins, such as MPZ, and by promoting the differentiation of Schwann cells. Involved in the development of the jaw openener musculature, probably by playing a role in its innervation through trigeminal motor neurons. May play a role in adipogenesis, possibly by regulating the expression of CEBPB. E3 SUMO-protein ligase helping SUMO1 conjugation to its coregulators NAB1 and NAB2, whose sumoylation down-regulates EGR2 transcriptional activity. The polypeptide is E3 SUMO-protein ligase EGR2 (EGR2) (Cerdocyon thous (Crab-eating fox)).